A 320-amino-acid chain; its full sequence is Putative thiosulfate sulfurtransferase (320 aa).

A signal peptide spans 1–37; that stretch reads MSVRSLRWPRQKAFLAVISLVVAVLLAVPGWLTPATA. 2 consecutive Rhodanese domains span residues 56-166 and 194-315; these read NNKQ…PVTK and LTGK…PVET. Residue C274 is the Cysteine persulfide intermediate of the active site.

Its subcellular location is the periplasm. It catalyses the reaction thiosulfate + hydrogen cyanide = thiocyanate + sulfite + 2 H(+). Its function is as follows. May be a sulfotransferase involved in the transport of sulfate. Displays very low rhodanese activity. The chain is Putative thiosulfate sulfurtransferase (rhdA) from Synechococcus elongatus (strain ATCC 33912 / PCC 7942 / FACHB-805) (Anacystis nidulans R2).